The sequence spans 624 residues: Bifunctional 3'-phosphoadenosine 5'-phosphosulfate synthase 1 (624 aa).

Residue Met1 is modified to N-acetylmethionine. The tract at residues 1 to 225 (MEIPGSLCKK…VVELLQERDI (225 aa)) is adenylyl-sulfate kinase. Lys12 carries the post-translational modification N6-acetyllysine. Residue 62 to 67 (GAGKTT) coordinates ATP. Adenosine 5'-phosphosulfate contacts are provided by residues 89–92 (DNIR), Phe101, 106–109 (REEN), 132–133 (IS), Lys171, and 184–185 (GF). ATP is bound by residues Cys207, Cys212, 419–422 (QLRN), 521–525 (GRDPA), and Ala563. Residues 234-624 (VKELYVPENK…VEYYKSLEKA (391 aa)) are sulfate adenylyltransferase.

In the N-terminal section; belongs to the APS kinase family. The protein in the C-terminal section; belongs to the sulfate adenylyltransferase family. In terms of assembly, homodimer. Expressed in the neonatal brain and in cartilage.

It carries out the reaction sulfate + ATP + H(+) = adenosine 5'-phosphosulfate + diphosphate. The enzyme catalyses adenosine 5'-phosphosulfate + ATP = 3'-phosphoadenylyl sulfate + ADP + H(+). It participates in sulfur metabolism; sulfate assimilation. Its function is as follows. Bifunctional enzyme with both ATP sulfurylase and APS kinase activity, which mediates two steps in the sulfate activation pathway. The first step is the transfer of a sulfate group to ATP to yield adenosine 5'-phosphosulfate (APS), and the second step is the transfer of a phosphate group from ATP to APS yielding 3'-phosphoadenylylsulfate (PAPS: activated sulfate donor used by sulfotransferase). In mammals, PAPS is the sole source of sulfate; APS appears to be only an intermediate in the sulfate-activation pathway. Required for normal biosynthesis of sulfated L-selectin ligands in endothelial cells. This chain is Bifunctional 3'-phosphoadenosine 5'-phosphosulfate synthase 1 (Papss1), found in Mus musculus (Mouse).